A 491-amino-acid polypeptide reads, in one-letter code: N-succinylglutamate 5-semialdehyde dehydrogenase (491 aa).

Residue 225–230 (GSSTVG) participates in NAD(+) binding. Residues Glu-248 and Cys-282 contribute to the active site.

Belongs to the aldehyde dehydrogenase family. AstD subfamily.

The enzyme catalyses N-succinyl-L-glutamate 5-semialdehyde + NAD(+) + H2O = N-succinyl-L-glutamate + NADH + 2 H(+). It participates in amino-acid degradation; L-arginine degradation via AST pathway; L-glutamate and succinate from L-arginine: step 4/5. Catalyzes the NAD-dependent reduction of succinylglutamate semialdehyde into succinylglutamate. This is N-succinylglutamate 5-semialdehyde dehydrogenase from Marinobacter nauticus (strain ATCC 700491 / DSM 11845 / VT8) (Marinobacter aquaeolei).